Consider the following 574-residue polypeptide: Lengsin (574 aa).

Disordered stretches follow at residues 1–36 (MNDE…KVTK) and 66–131 (GNMS…IPTT). Over residues 11 to 23 (NTRDEGNETEASR) the composition is skewed to basic and acidic residues. Residues 25 to 36 (SKLRRTRKKVTK) show a composition bias toward basic residues. Polar residues predominate over residues 91-131 (NQTTVIKPSPLKTSASAPCSEFNTNSNHADNTWEDTQIPTT). Residues 148–242 (NHLQFVRFEA…VICDTFTVTG (95 aa)) enclose the GS beta-grasp domain. The region spanning 249 to 574 (PRYIAKRQLS…ERNKFLEYFI (326 aa)) is the GS catalytic domain.

It belongs to the glutamine synthetase family. In terms of assembly, dodecamer. Interacts with BFSP2 and VIM.

May act as a component of the cytoskeleton or as a chaperone for the reorganization of intermediate filament proteins during terminal differentiation in the lens. Does not seem to have enzymatic activity. This Canis lupus familiaris (Dog) protein is Lengsin (LGSN).